The following is a 549-amino-acid chain: MKNINPTQTSAWQALQNHFDAMKEVTLAELFAKDADRFGKFSATFNDQMLVDYSKNRITEETLSKLLDLAKETDLAGAIKSMFSGEKINRTEDRAVLHVALRNRSNTPILVDGKDVMPEVNAVLEKMKKFSEAIISGEWKGYTGKPITDVVNIGIGGSDLGPFMVTEALRPYKNHLNMHFVSNVDGTHIAEVLKKVNPESTLFLVASKTFTTQETMTNAHSARDWFLKTAGDEKHVAKHFAALSTNAKAVGEFGIDTANMFEFWDWVGGRYSLWSAIGLSIILSVGYDNFVELLSGAHEMDKHFSTTPFEKNLPVLLALIGIWYNNFFGAETEAILPYDQYMHRFAAYFQQGNMESNGKYVDRNGNAVDYQTGPIIWGEPGTNGQHAFYQLIHQGTKLVPCDFIAPAITHNPLSDHHQKLLSNFFAQTEALAFGKSRDVVEQEFRDQGKDPAQLENVVPFKVFEGNRPTNSILLREITPFSLGALIALYEHKIFTQGAILNIFTFDQWGVELGKQLANRILPELGDNKEIASHDSSTNGLINRYKAWRG.

The active-site Proton donor is the E355. Residues H386 and K514 contribute to the active site.

It belongs to the GPI family.

Its subcellular location is the cytoplasm. The enzyme catalyses alpha-D-glucose 6-phosphate = beta-D-fructose 6-phosphate. It functions in the pathway carbohydrate biosynthesis; gluconeogenesis. The protein operates within carbohydrate degradation; glycolysis; D-glyceraldehyde 3-phosphate and glycerone phosphate from D-glucose: step 2/4. Functionally, catalyzes the reversible isomerization of glucose-6-phosphate to fructose-6-phosphate. The sequence is that of Glucose-6-phosphate isomerase from Cronobacter sakazakii (strain ATCC BAA-894) (Enterobacter sakazakii).